Here is a 378-residue protein sequence, read N- to C-terminus: Heme chaperone HemW (378 aa).

The region spanning 1–237 is the Radical SAM core domain; that stretch reads MVKLPPLSLY…LTAAGYQQYE (237 aa). S-adenosyl-L-methionine is bound at residue Y10. Residues C16, C20, and C23 each coordinate [4Fe-4S] cluster. Residues G66, 67 to 68, E99, Q126, R138, and D163 contribute to the S-adenosyl-L-methionine site; that span reads GT.

It belongs to the anaerobic coproporphyrinogen-III oxidase family. HemW subfamily. As to quaternary structure, binding of the [4Fe-4S] cofactor promotes dimerization. The cofactor is [4Fe-4S] cluster.

It is found in the cytoplasm. In terms of biological role, probably acts as a heme chaperone, transferring heme to the NarI subunit of the respiratory enzyme nitrate reductase; transfer may be stimulated by NADH. Binds one molecule of heme per monomer, possibly covalently. Heme binding is not affected by either [4Fe-4S] or S-adenosyl-L-methionine (SAM)-binding. Does not have coproporphyrinogen III dehydrogenase activity in vitro. Binds 1 [4Fe-4S] cluster. The cluster is coordinated with 3 cysteines and an exchangeable S-adenosyl-L-methionine. This is Heme chaperone HemW from Escherichia coli (strain K12).